A 182-amino-acid chain; its full sequence is ATP-dependent protease subunit HslV (182 aa).

Residue Thr-6 is part of the active site. Na(+)-binding residues include Ala-164, Cys-167, and Thr-170.

Belongs to the peptidase T1B family. HslV subfamily. In terms of assembly, a double ring-shaped homohexamer of HslV is capped on each side by a ring-shaped HslU homohexamer. The assembly of the HslU/HslV complex is dependent on binding of ATP.

The protein resides in the cytoplasm. The catalysed reaction is ATP-dependent cleavage of peptide bonds with broad specificity.. Its activity is regulated as follows. Allosterically activated by HslU binding. In terms of biological role, protease subunit of a proteasome-like degradation complex believed to be a general protein degrading machinery. The polypeptide is ATP-dependent protease subunit HslV (Borreliella afzelii (strain PKo) (Borrelia afzelii)).